Reading from the N-terminus, the 324-residue chain is MRILFIVDPLSTFKIYKDSTFAMMREAAARGYAIYTCQQSQLTLSGNVVETVATPLALTGDEHDWYRSGDPRLLPLTGFDAVLMRKDPPFDMEYVTSTWLLEIAERQGARVFNKPQAIRDHSEKLAIAQFREFTAPTIVTRDAKRLREFHAEQGDVIFKPLDGMGGAGIFRVGADGMNLGSVIETLTHNGTRTVMAQQYIPAIRDGDKRILLIGGSPVPHALARVPMAGEVRGNLAAGGTGRAQLLSERDQVIAHALAPVLWQRGLLLVGLDVIGDYLTEVNVTSPTCFQEITQQTGFNVAGMFIDALERAAGKASGGLGRKLA.

One can recognise an ATP-grasp domain in the interval 124-309; the sequence is KLAIAQFREF…VAGMFIDALE (186 aa). Residue 150 to 206 participates in ATP binding; it reads HAEQGDVIFKPLDGMGGAGIFRVGADGMNLGSVIETLTHNGTRTVMAQQYIPAIRDG. Mg(2+)-binding residues include glutamate 280 and asparagine 282.

The protein belongs to the prokaryotic GSH synthase family. Mg(2+) is required as a cofactor. Requires Mn(2+) as cofactor.

The enzyme catalyses gamma-L-glutamyl-L-cysteine + glycine + ATP = glutathione + ADP + phosphate + H(+). The protein operates within sulfur metabolism; glutathione biosynthesis; glutathione from L-cysteine and L-glutamate: step 2/2. This Ralstonia nicotianae (strain ATCC BAA-1114 / GMI1000) (Ralstonia solanacearum) protein is Glutathione synthetase.